Here is a 209-residue protein sequence, read N- to C-terminus: Large ribosomal subunit protein uL3 (209 aa).

The tract at residues 141-164 is disordered; the sequence is RAVGSMGGSSDPSRTFKSKKMPGH.

It belongs to the universal ribosomal protein uL3 family. In terms of assembly, part of the 50S ribosomal subunit. Forms a cluster with proteins L14 and L19.

Functionally, one of the primary rRNA binding proteins, it binds directly near the 3'-end of the 23S rRNA, where it nucleates assembly of the 50S subunit. The sequence is that of Large ribosomal subunit protein uL3 from Clostridium acetobutylicum (strain ATCC 824 / DSM 792 / JCM 1419 / IAM 19013 / LMG 5710 / NBRC 13948 / NRRL B-527 / VKM B-1787 / 2291 / W).